The sequence spans 696 residues: Glycine--tRNA ligase beta subunit (696 aa).

Belongs to the class-II aminoacyl-tRNA synthetase family. Tetramer of two alpha and two beta subunits.

Its subcellular location is the cytoplasm. The catalysed reaction is tRNA(Gly) + glycine + ATP = glycyl-tRNA(Gly) + AMP + diphosphate. The protein is Glycine--tRNA ligase beta subunit of Oleidesulfovibrio alaskensis (strain ATCC BAA-1058 / DSM 17464 / G20) (Desulfovibrio alaskensis).